The sequence spans 447 residues: Serine/threonine-protein phosphatase 2A 55 kDa regulatory subunit B delta isoform (447 aa).

WD repeat units lie at residues 26-65 (AEADIISTVEFNCSGDLLATGDKGGRVVIFQREQENKSRP), 91-132 (EIEE…KRVE), 175-213 (AHTYHINSISVNSDHETYLSADDLRINLWHLEITDRSFN), 224-264 (ELTE…LCDR), 283-321 (EIISSISDVKFSNSGRYMMTRDYLSVKVWDLNMESRPVE), 338-379 (ENDC…DITL), and 414-447 (DFNKKILHTAWHPTDNIIAVAATNNLYIFQDKVN).

The protein belongs to the phosphatase 2A regulatory subunit B family. As to quaternary structure, PP2A consists of a common heterodimeric core enzyme, composed of a 36 kDa catalytic subunit (subunit C) and a 65 kDa constant regulatory subunit (PR65 or subunit A), that associates with a variety of regulatory subunits. Proteins that associate with the core dimer include three families of regulatory subunits B (the R2/B/PR55/B55, R3/B''/PR72/PR130/PR59 and R5/B'/B56 families), the 48 kDa variable regulatory subunit, viral proteins, and cell signaling molecules. Interacts with ensa (when phosphorylated at 'Ser-67') and arpp19 (when phosphorylated at 'Ser-67'), leading to inhibit PP2A activity.

Its subcellular location is the cytoplasm. Its function is as follows. Substrate-recognition subunit of protein phosphatase 2A (PP2A) that plays a key role in cell cycle by controlling mitosis entry and exit. The activity of PP2A complexes containing ppp2r2d (PR55-delta) fluctuate during the cell cycle: the activity is high in interphase and low in mitosis. During mitosis, activity of PP2A is inhibited via interaction with phosphorylated ensa and arpp19 inhibitors. PP2A complexes containing ppp2r2d (PR55-delta) also regulate the activity of TGF-beta/Activin/Nodal signaling by restricting receptor activity. Within the PP2A complexes, the B regulatory subunits modulate substrate selectivity and catalytic activity, and may also direct the localization of the catalytic enzyme to a particular subcellular compartment. The protein is Serine/threonine-protein phosphatase 2A 55 kDa regulatory subunit B delta isoform (ppp2r2d) of Xenopus tropicalis (Western clawed frog).